Reading from the N-terminus, the 200-residue chain is Phospholipase A2 inhibitor gamma subunit B (200 aa).

Residues M1 to C19 form the signal peptide. Cystine bridges form between C22/C46, C25/C32, C39/C67, C73/C94, C95/C100, C120/C145, C138/C165, and C171/C191.

The protein belongs to the CNF-like-inhibitor family. In terms of assembly, heteromer composed of subunit A and subunit B.

The protein localises to the secreted. Functionally, inhibits the enzymatic activity of the phospholipase A2 (PLA2). This Elaphe climacophora (Japanese rat snake) protein is Phospholipase A2 inhibitor gamma subunit B.